We begin with the raw amino-acid sequence, 279 residues long: Rhamnulose-1-phosphate aldolase (279 aa).

The active site involves E115. 3 residues coordinate Zn(2+): H138, H140, and H209.

This sequence belongs to the aldolase class II family. RhaD subfamily. Zn(2+) is required as a cofactor.

Its subcellular location is the cytoplasm. The catalysed reaction is L-rhamnulose 1-phosphate = (S)-lactaldehyde + dihydroxyacetone phosphate. It participates in carbohydrate degradation; L-rhamnose degradation; glycerone phosphate from L-rhamnose: step 3/3. Catalyzes the reversible cleavage of L-rhamnulose-1-phosphate to dihydroxyacetone phosphate (DHAP) and L-lactaldehyde. The protein is Rhamnulose-1-phosphate aldolase of Enterococcus faecalis (strain ATCC 700802 / V583).